We begin with the raw amino-acid sequence, 116 residues long: Peptidyl-tRNA hydrolase (116 aa).

Belongs to the PTH2 family.

It is found in the cytoplasm. It catalyses the reaction an N-acyl-L-alpha-aminoacyl-tRNA + H2O = an N-acyl-L-amino acid + a tRNA + H(+). The natural substrate for this enzyme may be peptidyl-tRNAs which drop off the ribosome during protein synthesis. The chain is Peptidyl-tRNA hydrolase from Methanococcus maripaludis (strain C7 / ATCC BAA-1331).